Consider the following 906-residue polypeptide: Glutamate receptor 1 (906 aa).

The signal sequence occupies residues Met1 to Gly18. Residues Ala19–Ala536 are Extracellular-facing. 6 N-linked (GlcNAc...) asparagine glycosylation sites follow: Asn63, Asn249, Asn257, Asn363, Asn401, and Asn406. A disulfide bond links Cys75 and Cys323. L-glutamate contacts are provided by Pro492, Thr494, and Arg499. The chain crosses the membrane as a helical span at residues Tyr537–Val557. Topologically, residues Ser558–Glu584 are cytoplasmic. An intramembrane region (helical; Pore-forming) is located at residues Phe585–Gln600. The stretch at Gln601–Cys603 is an intramembrane region. Cys603 is lipidated: S-palmitoyl cysteine. Topologically, residues Asp604–Ser609 are cytoplasmic. The chain crosses the membrane as a helical span at residues Leu610–Tyr630. Residues Thr631–Asn805 are Extracellular-facing. Ser645 is modified (phosphoserine). L-glutamate contacts are provided by Ser668 and Thr669. At Ser710 the chain carries Phosphoserine. An L-glutamate-binding site is contributed by Glu719. A disulfide bridge connects residues Cys732 and Cys787. The helical transmembrane segment at Val806–Ile826 threads the bilayer. At Glu827–Leu906 the chain is on the cytoplasmic side. The S-palmitoyl cysteine moiety is linked to residue Cys829. 2 positions are modified to phosphoserine: Ser849 and Ser863. Positions Arg861–Ser880 are disordered. The short motif at Ala903 to Leu906 is the PDZ-binding element.

This sequence belongs to the glutamate-gated ion channel (TC 1.A.10.1) family. GRIA1 subfamily. As to quaternary structure, homotetramer or heterotetramer of pore-forming glutamate receptor subunits; heteromeric assembly can be the result of both receptor subtype and flip or flop form and according the composition, one partner can be dominant with respect to the fast desensitizing current component, whereas the other can determine the steady-state component. Tetramers may be formed by the dimerization of dimers. Found in a complex with GRIA2, GRIA3, GRIA4, CNIH2, CNIH3, CACNG2, CACNG3, CACNG4, CACNG5, CACNG7 and CACNG8. Interacts with HIP1 and RASGRF2. Interacts with SYNDIG1 and GRIA2. Interacts with DLG1 (via C-terminus). Interacts with LRFN1. Interacts with PRKG2. Interacts with CNIH2 and CACNG2. Interacts with CACNG5; this interaction modulates the gating. Interacts (via C-terminus) with PDLIM4 (via LIM domain); this interaction as well as the interaction of PDLIM4 with alpha-actinin is required for their colocalization in early endosomes. Interacts with SNX27 (via PDZ domain); the interaction is required for recycling to the plasma membrane when endocytosed and prevent degradation in lysosomes. Interacts (via PDZ-binding motif) with SHANK3 (via PDZ domain). Interacts with CACNG3; associates GRIA1 with the adapter protein complex 4 (AP-4) to target GRIA1 to the somatodendritic compartment of neurons. Interacts with CACNG2; this interaction mediates traffick to the plasma membrane and modulation of desensitization. Interacts with CNIH2 and CNIH3; this interaction promotes expression at the plasma membrane and extensively modulates their gating properties by slowing deactivation and desensitization kinetics. Found in a complex with GRIA2, GRIA3, GRIA4, DLG4, CACNG8 and CNIH2. In terms of processing, palmitoylated. Depalmitoylated by CPT1C and upon L-glutamate stimulation. ZDHHC3/GODZ specifically palmitoylates Cys-603, which leads to Golgi retention and decreased cell surface expression. In contrast, Cys-829 palmitoylation does not affect cell surface expression but regulates stimulation-dependent endocytosis. Post-translationally, phosphorylated at Ser-645. Phosphorylated at Ser-710 by PKC. Phosphorylated at Ser-849 by PKC, PKA and CAMK2. Phosphorylated at Ser-863 by PKC, PKA and PRKG2. Phosphorylation of Ser-863 is reduced by induction of long-term depression and increased by induction of long-term potentiation. In terms of tissue distribution, widely expressed in brain.

It localises to the cell membrane. The protein resides in the endoplasmic reticulum membrane. Its subcellular location is the postsynaptic cell membrane. It is found in the postsynaptic density membrane. The protein localises to the cell projection. It localises to the dendrite. The protein resides in the dendritic spine. Its subcellular location is the early endosome membrane. It is found in the recycling endosome membrane. The protein localises to the presynapse. It localises to the synapse. The catalysed reaction is Ca(2+)(in) = Ca(2+)(out). The enzyme catalyses Na(+)(in) = Na(+)(out). It carries out the reaction Mg(2+)(in) = Mg(2+)(out). It catalyses the reaction Li(+)(in) = Li(+)(out). The catalysed reaction is K(+)(in) = K(+)(out). The enzyme catalyses Sr(2+)(in) = Sr(2+)(out). Its function is as follows. Ionotropic glutamate receptor that functions as a ligand-gated cation channel, gated by L-glutamate and glutamatergic agonists such as alpha-amino-3-hydroxy-5-methyl-4-isoxazolepropionic acid (AMPA), quisqualic acid, and kainic acid. L-glutamate acts as an excitatory neurotransmitter at many synapses in the central nervous system. Binding of the excitatory neurotransmitter L-glutamate induces a conformation change, leading to the opening of the cation channel, and thereby converts the chemical signal to an electrical impulse upon entry of monovalent and divalent cations such as sodium and calcium. The receptor then desensitizes rapidly and enters in a transient inactive state, characterized by the presence of bound agonist. In the presence of CACNG2 or CACNG4 or CACNG7 or CACNG8, shows resensitization which is characterized by a delayed accumulation of current flux upon continued application of L-glutamate. Resensitization is blocked by CNIH2 through interaction with CACNG8 in the CACNG8-containing AMPA receptors complex. Calcium (Ca(2+)) permeability depends on subunits composition and, heteromeric channels containing edited GRIA2 subunit are calcium-impermeable. Also permeable to other divalents cations such as strontium(2+) and magnesium(2+) and monovalent cations such as potassium(1+) and lithium(1+). This Homo sapiens (Human) protein is Glutamate receptor 1.